The chain runs to 155 residues: Transcriptional regulator MraZ (155 aa).

SpoVT-AbrB domains lie at 7 to 54 (TYEC…PMEE) and 83 to 126 (VKTV…DKDK).

The protein belongs to the MraZ family. As to quaternary structure, forms oligomers.

It localises to the cytoplasm. It is found in the nucleoid. This Christiangramia forsetii (strain DSM 17595 / CGMCC 1.15422 / KT0803) (Gramella forsetii) protein is Transcriptional regulator MraZ.